Reading from the N-terminus, the 52-residue chain is Large ribosomal subunit protein bL32c (52 aa).

This sequence belongs to the bacterial ribosomal protein bL32 family.

Its subcellular location is the plastid. The protein localises to the chloroplast. In Eucalyptus globulus subsp. globulus (Tasmanian blue gum), this protein is Large ribosomal subunit protein bL32c.